Reading from the N-terminus, the 227-residue chain is Agamous-like MADS-box protein AGL17 (227 aa).

Positions 3-57 (RGKIVIQKIDDSTSRQVTFSKRRKGLIKKAKELAILCDAEVCLIIFSNTDKLYDF) constitute an MADS-box domain. The K-box domain occupies 86-176 (VKFWQREAET…SRKVQRIHQE (91 aa)).

As to expression, preferentially expressed in roots.

Its subcellular location is the nucleus. Functionally, probable transcription factor. The protein is Agamous-like MADS-box protein AGL17 (AGL17) of Arabidopsis thaliana (Mouse-ear cress).